We begin with the raw amino-acid sequence, 118 residues long: Movement protein TGB2 (118 aa).

Topologically, residues 1 to 11 (MSREITARPNK) are cytoplasmic. Residues 12 to 32 (NVPIVVGVCVVAFFVLLAFMQ) traverse the membrane as a helical segment. Topologically, residues 33-81 (QKHKTHSGGDYGVPTFSNGGKYRDGTRSADFNSNNHRAYGCGGSGGSVS) are lumenal. The helical transmembrane segment at 82–102 (SRVGQQLVVLAIVSVLIVSLL) threads the bilayer. Residues 103-118 (QRLRSPPEHICNGACG) lie on the Cytoplasmic side of the membrane.

Belongs to the virgaviridae/benyvirus TGB2 movement protein family. As to quaternary structure, interacts with movement protein TGB3.

The protein localises to the host cell junction. It is found in the host plasmodesma. Its subcellular location is the host endoplasmic reticulum membrane. Functionally, participates in the transport of viral RNA to the plasmodesmata. Is probably targeted to plasmodesmata by TGBp3, along with viral RNAs-TGBp1 (RNP complex). Can gate plasmodesmata and increase their size exclusion limit. In Beet necrotic yellow vein virus (isolate Japan/S) (BNYVV), this protein is Movement protein TGB2.